The primary structure comprises 332 residues: MAENDGETIVPDEQCNLTASTPMKSSGLEQVESPKERKTSMVECDDEGNPSSGTPDESPKQLTPHSIPPRRRRSPRRPEVSASRLPLKVLNQIFQYLPLKDLRSAMLTCHSWNNALSMEDSDIWQYLLGKKLPEAAVSDPFLLAELGSAKKKLRAWYFAWNTSDISRNNYIRTNGFTVHRQPVAQSTDGVRGKRGISKGVHAFDITWDGPLGTVAVVGIATKHAALHCVGYVALLGSDDQSWGWNLVDNVLMHNGAQLGVYPKMNNPPKYEVGDKIRLIIDCDTHVAYFERNSEFLGIAFNHIPPLRLYPAVCAVYGNTEVTMVYVGSPQMG.

Residues 1 to 82 are disordered; the sequence is MAENDGETIV…RSPRRPEVSA (82 aa). Polar residues-rich tracts occupy residues 15 to 28 and 49 to 64; these read CNLT…SSGL and NPSS…QLTP. The region spanning 79–127 is the F-box domain; that stretch reads EVSASRLPLKVLNQIFQYLPLKDLRSAMLTCHSWNNALSMEDSDIWQYL. The B30.2/SPRY domain maps to 138–330; that stretch reads SDPFLLAELG…VTMVYVGSPQ (193 aa).

It belongs to the FBXO45/Fsn family. As to quaternary structure, component of an SCF (SKP1-CUL1-F-box protein) E3 ubiquitin ligase complex composed of cul-1, fsn-1, rpm-1 and skr-1. Interacts (via SPRY domain) with scd-2 (via cytoplasmic domain). Interacts (via SPRY domain) with convertase egl-3 (via C-terminus). As to expression, expressed in GABAergic neuromuscular junctions (NMJs).

Its subcellular location is the synapse. It functions in the pathway protein modification; protein ubiquitination. Component of a SCF (SKP1-CUL1-F-box protein) E3 ubiquitin ligase complex which is required for the restriction and/or maturation of synapses in GABAergic neuromuscular junction (NMJ) presynaptic neurons. Promotes NRJ synapse development and synaptic transmission by negatively regulating the daf-2/InsR pathway in muscles. By targeting convertase egl-3 for degradation, negatively modulates insulin-like protein ins-4 and ins-6 processing. May stabilize synapse formation by promoting the down-regulation of scd-2. Regulates axon termination in PLM and ALM neurons. The chain is F-box/SPRY domain-containing protein 1 (fsn-1) from Caenorhabditis elegans.